A 96-amino-acid chain; its full sequence is Plasminogen-like protein A (96 aa).

Residues 1–19 form the signal peptide; the sequence is MEHKEVVLLLLLFLKSGQG. Residues 20–96 form the PAN domain; sequence EPLDDYVNAQ…RMRDVVLFEK (77 aa). Disulfide bonds link C49/C73 and C53/C61.

In terms of tissue distribution, expressed in liver.

Its subcellular location is the secreted. In terms of biological role, may bind non-covalently to lysine binding sites present in the kringle structures of plasminogen. This may interfere with the binding of fibrin or alpha-2-antiplasmin to plasminogen and may result in the localization of activity at sites necessary for extracellular matrix destruction. This chain is Plasminogen-like protein A (PLGLA), found in Homo sapiens (Human).